Reading from the N-terminus, the 446-residue chain is Calcium-binding and coiled-coil domain-containing protein 2 (446 aa).

A CLIR motif is present at residues 133–136; that stretch reads ILVV. Residues 137 to 349 are a coiled coil; that stretch reads TTQGEVEEIE…RENSRLLSYM (213 aa). An LIR-like motif is present at residues 203-206; that stretch reads DYWE. Positions 362–390 are disordered; it reads TSDEGGARQNPGLAYGNPYSGIQESSSPS. Residues 371-381 form an interaction with LGALS8 region; that stretch reads NPGLAYGNPYS. Polar residues predominate over residues 381–390; that stretch reads SGIQESSSPS. The interval 395 to 446 is interaction with MYO6; that stretch reads KKCPICKADDICDHTLEQQQMQPLCFNCPICDKIFPATEKQIFEDHVFCHSL. A UBZ1-type zinc finger spans residues 419–444; that stretch reads CFNCPICDKIFPATEKQIFEDHVFCH. Residues Cys422, Cys425, His440, and His444 each coordinate Zn(2+). Ser445 is modified (phosphoserine).

It belongs to the CALCOCO family. In terms of assembly, dimer. Part of a complex consisting of CALCOCO2, TAX1BP1 and MYO6. Interacts with MYO6. Interacts with GEMIN4. Interacts with ATG8 family members MAP1LC3A, MAP1LC3B, GABARAP, GABARAPL1 and GABARAPL2. Interacts with ATG8 family member MAP1LC3C. Interacts with LGALS8. Interacts with TOM1; the interaction is indirect and is mediated by MYO6, which acts as a bridge between TOM1 and CALCOCO2. Interacts with AZI2. (Microbial infection) Interacts with Lassa virus protein Z. As to quaternary structure, (Microbial infection) Interacts with Mopeia virus protein Z. (Microbial infection) Cleaved by S.pyogenes SpeB protease; leading to its degradation. Degradation by SpeB prevents autophagy, promoting to S.pyogenes intracellular replication. Expressed in all tissues tested with highest expression in skeletal muscle and lowest in brain.

The protein resides in the cytoplasm. It localises to the perinuclear region. It is found in the cytoskeleton. Its subcellular location is the cytoplasmic vesicle. The protein localises to the autophagosome membrane. In terms of biological role, xenophagy-specific receptor required for autophagy-mediated intracellular bacteria degradation. Acts as an effector protein of galectin-sensed membrane damage that restricts the proliferation of infecting pathogens such as Salmonella typhimurium upon entry into the cytosol by targeting LGALS8-associated bacteria for autophagy. Initially orchestrates bacteria targeting to autophagosomes and subsequently ensures pathogen degradation by regulating pathogen-containing autophagosome maturation. Bacteria targeting to autophagosomes relies on its interaction with MAP1LC3A, MAP1LC3B and/or GABARAPL2, whereas regulation of pathogen-containing autophagosome maturation requires the interaction with MAP3LC3C. May play a role in ruffle formation and actin cytoskeleton organization and seems to negatively regulate constitutive secretion. In Homo sapiens (Human), this protein is Calcium-binding and coiled-coil domain-containing protein 2 (CALCOCO2).